The primary structure comprises 387 residues: Apoptosis-inducing factor homolog B (387 aa).

FAD contacts are provided by residues 12–16, R47, and D292; that span reads GGGYG.

It belongs to the FAD-dependent oxidoreductase family. FAD serves as cofactor.

In terms of biological role, putative FAD-dependent oxidoreductase. The polypeptide is Apoptosis-inducing factor homolog B (aifB) (Dictyostelium discoideum (Social amoeba)).